We begin with the raw amino-acid sequence, 765 residues long: AMP deaminase 3 (765 aa).

Phosphoserine is present on residues Ser-85 and Ser-106. 2 residues coordinate Zn(2+): His-315 and His-317. Substrate contacts are provided by residues His-317 and 386–391 (KFNSKY). His-584 is a Zn(2+) binding site. Glu-587 provides a ligand contact to substrate. His-606 acts as the Proton acceptor in catalysis. Asp-661 contributes to the Zn(2+) binding site. 662-665 (DPMQ) contributes to the substrate binding site.

It belongs to the metallo-dependent hydrolases superfamily. Adenosine and AMP deaminases family. As to quaternary structure, homotetramer. It depends on Zn(2+) as a cofactor. As to expression, expressed in adult tissues such as aorta, heart, kidney, lung, muscle and thyroid. Weakly expressed in thyroid and not detected in liver.

It carries out the reaction AMP + H2O + H(+) = IMP + NH4(+). It participates in purine metabolism; IMP biosynthesis via salvage pathway; IMP from AMP: step 1/1. In terms of biological role, AMP deaminase plays a critical role in energy metabolism. This Rattus norvegicus (Rat) protein is AMP deaminase 3.